The primary structure comprises 152 residues: Mid1-interacting protein 1A (152 aa).

The segment covering serine 87–glutamate 105 has biased composition (basic and acidic residues). The disordered stretch occupies residues serine 87–aspartate 109.

Belongs to the SPOT14 family. Expressed for a short period in the cells that will produce the enveloping layer (EVL).

The protein resides in the nucleus. Its subcellular location is the cytoplasm. It localises to the cytoskeleton. Involved in stabilization of microtubules. May play a role in the regulation of lipogenesis. This is Mid1-interacting protein 1A (mid1ip1a) from Danio rerio (Zebrafish).